The sequence spans 1029 residues: Chitin synthase 3 (1029 aa).

The segment at methionine 1–aspartate 29 is disordered. Asparagine 37 carries N-linked (GlcNAc...) asparagine glycosylation. Residues alanine 46–serine 71 show a composition bias toward low complexity. Disordered regions lie at residues alanine 46–proline 105 and leucine 168–serine 209. A compositionally biased stretch (polar residues) spans serine 76–serine 91. Residues alanine 191–aspartate 202 are compositionally biased toward basic and acidic residues. Residues asparagine 401, asparagine 514, asparagine 527, and asparagine 689 are each glycosylated (N-linked (GlcNAc...) asparagine). 7 consecutive transmembrane segments (helical) span residues phenylalanine 723–phenylalanine 743, isoleucine 760–isoleucine 780, alanine 796–leucine 816, alanine 830–alanine 850, phenylalanine 860–cysteine 880, valine 963–alanine 983, and valine 998–serine 1018.

Belongs to the chitin synthase family. Class I subfamily.

It is found in the cell membrane. It localises to the cytoplasmic vesicle membrane. The enzyme catalyses [(1-&gt;4)-N-acetyl-beta-D-glucosaminyl](n) + UDP-N-acetyl-alpha-D-glucosamine = [(1-&gt;4)-N-acetyl-beta-D-glucosaminyl](n+1) + UDP + H(+). Functionally, polymerizes chitin, a structural polymer of the cell wall and septum, by transferring the sugar moiety of UDP-GlcNAc to the non-reducing end of the growing chitin polymer. The sequence is that of Chitin synthase 3 from Mycosarcoma maydis (Corn smut fungus).